Here is a 690-residue protein sequence, read N- to C-terminus: Methionine--tRNA ligase (690 aa).

Positions Pro12–His22 match the 'HIGH' region motif. 4 residues coordinate Zn(2+): Cys144, Cys147, Cys157, and Cys160. Residues Gln333–Ser337 carry the 'KMSKS' region motif. Lys336 is a binding site for ATP. Positions Lys535 to Lys632 constitute a tRNA-binding domain.

This sequence belongs to the class-I aminoacyl-tRNA synthetase family. MetG type 1 subfamily. Homodimer. Zn(2+) is required as a cofactor.

It is found in the cytoplasm. It carries out the reaction tRNA(Met) + L-methionine + ATP = L-methionyl-tRNA(Met) + AMP + diphosphate. In terms of biological role, is required not only for elongation of protein synthesis but also for the initiation of all mRNA translation through initiator tRNA(fMet) aminoacylation. The chain is Methionine--tRNA ligase from Picrophilus torridus (strain ATCC 700027 / DSM 9790 / JCM 10055 / NBRC 100828 / KAW 2/3).